A 122-amino-acid chain; its full sequence is Large ribosomal subunit protein uL14 (122 aa).

It belongs to the universal ribosomal protein uL14 family. As to quaternary structure, part of the 50S ribosomal subunit. Forms a cluster with proteins L3 and L19. In the 70S ribosome, L14 and L19 interact and together make contacts with the 16S rRNA in bridges B5 and B8.

Its function is as follows. Binds to 23S rRNA. Forms part of two intersubunit bridges in the 70S ribosome. The protein is Large ribosomal subunit protein uL14 of Xanthomonas axonopodis pv. citri (strain 306).